The sequence spans 117 residues: DNA-directed RNA polymerase II subunit RPB11 (117 aa).

It belongs to the archaeal Rpo11/eukaryotic RPB11/RPC19 RNA polymerase subunit family. In terms of assembly, component of the RNA polymerase II (Pol II) complex consisting of 12 subunits.

It is found in the nucleus. Functionally, DNA-dependent RNA polymerase catalyzes the transcription of DNA into RNA using the four ribonucleoside triphosphates as substrates. Component of RNA polymerase II which synthesizes mRNA precursors and many functional non-coding RNAs. Pol II is the central component of the basal RNA polymerase II transcription machinery. It is composed of mobile elements that move relative to each other. RPB11 is part of the core element with the central large cleft. In Drosophila melanogaster (Fruit fly), this protein is DNA-directed RNA polymerase II subunit RPB11.